The following is a 397-amino-acid chain: CCA-adding enzyme (397 aa).

ATP-binding residues include G27 and R30. Positions 27 and 30 each coordinate CTP. Residues D40 and D42 each coordinate Mg(2+). 5 residues coordinate ATP: R111, D154, R157, R160, and R163. 5 residues coordinate CTP: R111, D154, R157, R160, and R163.

This sequence belongs to the tRNA nucleotidyltransferase/poly(A) polymerase family. Bacterial CCA-adding enzyme type 3 subfamily. In terms of assembly, homodimer. Mg(2+) serves as cofactor.

The enzyme catalyses a tRNA precursor + 2 CTP + ATP = a tRNA with a 3' CCA end + 3 diphosphate. It catalyses the reaction a tRNA with a 3' CCA end + 2 CTP + ATP = a tRNA with a 3' CCACCA end + 3 diphosphate. In terms of biological role, catalyzes the addition and repair of the essential 3'-terminal CCA sequence in tRNAs without using a nucleic acid template. Adds these three nucleotides in the order of C, C, and A to the tRNA nucleotide-73, using CTP and ATP as substrates and producing inorganic pyrophosphate. tRNA 3'-terminal CCA addition is required both for tRNA processing and repair. Also involved in tRNA surveillance by mediating tandem CCA addition to generate a CCACCA at the 3' terminus of unstable tRNAs. While stable tRNAs receive only 3'-terminal CCA, unstable tRNAs are marked with CCACCA and rapidly degraded. In Bacillus licheniformis (strain ATCC 14580 / DSM 13 / JCM 2505 / CCUG 7422 / NBRC 12200 / NCIMB 9375 / NCTC 10341 / NRRL NRS-1264 / Gibson 46), this protein is CCA-adding enzyme.